Here is a 270-residue protein sequence, read N- to C-terminus: Putative pyruvate, phosphate dikinase regulatory protein (270 aa).

Position 151–158 (151–158 (GVSRTSKT)) interacts with ADP.

The protein belongs to the pyruvate, phosphate/water dikinase regulatory protein family. PDRP subfamily.

The enzyme catalyses N(tele)-phospho-L-histidyl/L-threonyl-[pyruvate, phosphate dikinase] + ADP = N(tele)-phospho-L-histidyl/O-phospho-L-threonyl-[pyruvate, phosphate dikinase] + AMP + H(+). The catalysed reaction is N(tele)-phospho-L-histidyl/O-phospho-L-threonyl-[pyruvate, phosphate dikinase] + phosphate + H(+) = N(tele)-phospho-L-histidyl/L-threonyl-[pyruvate, phosphate dikinase] + diphosphate. Bifunctional serine/threonine kinase and phosphorylase involved in the regulation of the pyruvate, phosphate dikinase (PPDK) by catalyzing its phosphorylation/dephosphorylation. This is Putative pyruvate, phosphate dikinase regulatory protein (yqfL) from Bacillus subtilis (strain 168).